Consider the following 408-residue polypeptide: Histidine--tRNA ligase (408 aa).

It belongs to the class-II aminoacyl-tRNA synthetase family. In terms of assembly, homodimer.

It localises to the cytoplasm. It catalyses the reaction tRNA(His) + L-histidine + ATP = L-histidyl-tRNA(His) + AMP + diphosphate + H(+). The chain is Histidine--tRNA ligase from Campylobacter jejuni subsp. jejuni serotype O:23/36 (strain 81-176).